A 140-amino-acid chain; its full sequence is 3-hydroxyacyl-[acyl-carrier-protein] dehydratase FabZ (140 aa).

His-48 is an active-site residue.

The protein belongs to the thioester dehydratase family. FabZ subfamily.

It is found in the cytoplasm. It catalyses the reaction a (3R)-hydroxyacyl-[ACP] = a (2E)-enoyl-[ACP] + H2O. In terms of biological role, involved in unsaturated fatty acids biosynthesis. Catalyzes the dehydration of short chain beta-hydroxyacyl-ACPs and long chain saturated and unsaturated beta-hydroxyacyl-ACPs. This Halalkalibacterium halodurans (strain ATCC BAA-125 / DSM 18197 / FERM 7344 / JCM 9153 / C-125) (Bacillus halodurans) protein is 3-hydroxyacyl-[acyl-carrier-protein] dehydratase FabZ.